A 209-amino-acid polypeptide reads, in one-letter code: Large ribosomal subunit protein uL3 (209 aa).

The disordered stretch occupies residues 126–165 (HNFGGGSRTHGQSDRLRAPGSVGGSSDPSRTFRGTRMAGR).

It belongs to the universal ribosomal protein uL3 family. Part of the 50S ribosomal subunit. Forms a cluster with proteins L14 and L19.

One of the primary rRNA binding proteins, it binds directly near the 3'-end of the 23S rRNA, where it nucleates assembly of the 50S subunit. This is Large ribosomal subunit protein uL3 from Chlorobium limicola (strain DSM 245 / NBRC 103803 / 6330).